The primary structure comprises 104 residues: Chitin-binding protein 2 (104 aa).

In terms of assembly, oligomer in an unreduced state. Glycosylated.

Functionally, chitin-binding protein. Has antifungal activity against C.krusei, C.albicans, C.tropicalis and C.parapsilosis. Inhibits C.albicans by increasing cell membrane permeability and production of reactive oxygen species. Has no hemagglutinating activity. The polypeptide is Chitin-binding protein 2 (Moringa oleifera (Horseradish tree)).